Reading from the N-terminus, the 242-residue chain is GDSL esterase/lipase At5g62930 (242 aa).

The active-site Nucleophile is Ser-11. The tract at residues 223-242 (PHHSHIDGKNPSKAFEERCL) is disordered.

This sequence belongs to the 'GDSL' lipolytic enzyme family.

This chain is GDSL esterase/lipase At5g62930, found in Arabidopsis thaliana (Mouse-ear cress).